We begin with the raw amino-acid sequence, 1023 residues long: NLR family CARD domain-containing protein 4 (1023 aa).

Residues 1–88 (MNFIKENSQA…PVYQDLTGHS (88 aa)) form the CARD domain. Residues 95–298 (EEDLDVLAQS…HVGALTVEVG (204 aa)) are nucleotide-binding domain (NBD). Positions 163-476 (SPCLIEGESG…VSKGNSYLKK (314 aa)) constitute an NACHT domain. 169 to 176 (GESGKGKS) is an ATP binding site. Residues 356–463 (AHTQTMLFQT…RLSSLLKSRE (108 aa)) form a winged-helix domain (WHD) region. Residue S533 is modified to Phosphoserine. LRR repeat units lie at residues 578–598 (FFQG…LFDF), 655–678 (MQKF…DIKY), 734–757 (VTDL…LADS), 761–784 (LKNL…SLAE), 786–811 (LRNL…DYIV), 823–846 (EMKL…LHNL), 847–869 (VKLS…ALQG), 877–901 (LEQL…LLKQ), 910–932 (KLGL…FLEM), 935–962 (LRDL…VFEN), 964–984 (KQLV…ALVR), and 998–1020 (EARL…TFKL).

In terms of assembly, homooligomer; homooligomerizes following activation of Naip proteins by pathogenic proteins such as S.typhimurium (Salmonella) flagellin or PrgJ. Component of the NLRC4 inflammasome, at least composed of NLRC4, caspase-1 (CASP1) and some NAIP family member. Interacts with EIF2AK2/PKR. Phosphorylated at Ser-533 following infection of macrophages with S.typhimurium (Salmonella). Phosphorylation is essential for NLRC4 inflammasome function to promote caspase-1 activation and pyroptosis. PRKCD phosphorylates Ser-533 in vitro.

It localises to the cytoplasm. The protein localises to the cytosol. Functionally, key component of inflammasomes that indirectly senses specific proteins from pathogenic bacteria and fungi and responds by assembling an inflammasome complex that promotes caspase-1 activation, cytokine production and macrophage pyroptosis. The NLRC4 inflammasome is activated as part of the innate immune response to a range of intracellular bacteria. This Rattus norvegicus (Rat) protein is NLR family CARD domain-containing protein 4 (Nlrc4).